A 515-amino-acid polypeptide reads, in one-letter code: Maturase K (515 aa).

Belongs to the intron maturase 2 family. MatK subfamily.

It localises to the plastid. It is found in the chloroplast. Its function is as follows. Usually encoded in the trnK tRNA gene intron. Probably assists in splicing its own and other chloroplast group II introns. This chain is Maturase K, found in Pinus densiflora (Japanese red pine).